Reading from the N-terminus, the 732-residue chain is Translation initiation factor IF-2 (732 aa).

The tract at residues 40 to 147 (PEVVEKLDHT…QQEQPMKKEK (108 aa)) is disordered. Over residues 42–67 (VVEKLDHTYNKKNERPQASAPKEKQK) the composition is skewed to basic and acidic residues. A compositionally biased stretch (basic residues) spans 90-103 (KVPKKKSANKKKEG). The span at 104 to 117 (KKHDLQLQQQEKKI) shows a compositional bias: basic and acidic residues. A compositionally biased stretch (basic residues) spans 118-129 (FHQQKKKIKGKA). One can recognise a tr-type G domain in the interval 233-402 (ERPPVVTIMG…LLVSEMEELK (170 aa)). The tract at residues 242 to 249 (GHVDHGKT) is G1. 242–249 (GHVDHGKT) is a GTP binding site. The interval 267–271 (GITQH) is G2. Residues 288–291 (DTPG) form a G3 region. Residues 288–292 (DTPGH) and 342–345 (NKMD) contribute to the GTP site. Positions 342–345 (NKMD) are G4. A G5 region spans residues 378 to 380 (SAK).

The protein belongs to the TRAFAC class translation factor GTPase superfamily. Classic translation factor GTPase family. IF-2 subfamily.

It is found in the cytoplasm. In terms of biological role, one of the essential components for the initiation of protein synthesis. Protects formylmethionyl-tRNA from spontaneous hydrolysis and promotes its binding to the 30S ribosomal subunits. Also involved in the hydrolysis of GTP during the formation of the 70S ribosomal complex. This is Translation initiation factor IF-2 from Geobacillus sp. (strain WCH70).